The sequence spans 436 residues: YRLTYYTPDNQVSETDILAAFRMTPQPGVPAEECGAAVAAESSTGTWTTVWTDGLTQLDRDKGRCYDLEPVPGESNQYIAYVAYPIDLFEEGSVTNLLTSIVGNVFGFKALRALRLEDLRIPPAYSKTFWGPPHGIQVERDRLNKYGRPLLGCTIKPKLGLSAKNYGRAVYECLRGGLDFTKDDENVNSQSFMRWRDRFLFCAEAIYKAQTETGEVKGHYLNATAGTCEEMYKRASFAAQIGVPIIMHDYLTGGFTANTSLAMYCRDNGLLLHIHRAMHAVIDRQRNHGIHFRVLAKTLRMSGGDHLHSGTVVGKLEGEREVTLGFVDLMRDAYVEKDRSRGIYFTQDWCGMGGTMPVASGGIHVWHMPALTEIFGDDACLQFGGGTLGHPWGNAPGAAANRVASEACVQARNEGRDLSREGGDVIREACKWSPEL.

Positions 104 and 154 each coordinate substrate. K156 functions as the Proton acceptor in the catalytic mechanism. K158 contacts substrate. 3 residues coordinate Mg(2+): K182, D184, and E185. K182 bears the N6-carboxylysine mark. Catalysis depends on H275, which acts as the Proton acceptor. The substrate site is built by R276, H308, and S360.

It belongs to the RuBisCO large chain family. Type I subfamily. Heterohexadecamer of 8 large chains and 8 small chains; disulfide-linked. The disulfide link is formed within the large subunit homodimers. It depends on Mg(2+) as a cofactor. The disulfide bond which can form in the large chain dimeric partners within the hexadecamer appears to be associated with oxidative stress and protein turnover.

The protein localises to the plastid. It is found in the chloroplast. It carries out the reaction 2 (2R)-3-phosphoglycerate + 2 H(+) = D-ribulose 1,5-bisphosphate + CO2 + H2O. The enzyme catalyses D-ribulose 1,5-bisphosphate + O2 = 2-phosphoglycolate + (2R)-3-phosphoglycerate + 2 H(+). Functionally, ruBisCO catalyzes two reactions: the carboxylation of D-ribulose 1,5-bisphosphate, the primary event in carbon dioxide fixation, as well as the oxidative fragmentation of the pentose substrate in the photorespiration process. Both reactions occur simultaneously and in competition at the same active site. The polypeptide is Ribulose bisphosphate carboxylase large chain (Euglena geniculata).